The sequence spans 419 residues: MQKLIIHGGKPLEGSINISGAKNAVLPIMAASILTNKLHITNVPKLTDVSTMKDLLRNHGACIRIIEHTDEFELIINTTNINKFTADYEIVRKMRASIWVLGPLLTKYGKAKVSLPGGCAIGARQVDLHIAVLKSMGAEIEIEDGYINASSKGRLKGTHFIFDKVSVGATINAILAAVLAKGETVLFNCGREPEIVDLCYCLIKMGADILGVGSSTITIKGKDCLNETSYKVLSDRIEAGTYMFAAAITKGDVKICGIDYNIIENIALKLIETGIKVVQINNGVQVTYKGKLNSVDLETNPYPGFATDLQAQFMSLMSISSGVSMITENIFENRFMHVPELCRMGADIVVRGNKAVVRGVEMLKGAEVMASDLRASVSLILAGLSTNSKTVLHRIYHLDRGFQDLEKKLSNCGANIKRV.

Residue 22–23 (KN) participates in phosphoenolpyruvate binding. Arg-95 lines the UDP-N-acetyl-alpha-D-glucosamine pocket. Catalysis depends on Cys-119, which acts as the Proton donor. At Cys-119 the chain carries 2-(S-cysteinyl)pyruvic acid O-phosphothioketal. Residues 164-167 (KVSV), Asp-308, and Ile-330 each bind UDP-N-acetyl-alpha-D-glucosamine.

It belongs to the EPSP synthase family. MurA subfamily.

The protein resides in the cytoplasm. It catalyses the reaction phosphoenolpyruvate + UDP-N-acetyl-alpha-D-glucosamine = UDP-N-acetyl-3-O-(1-carboxyvinyl)-alpha-D-glucosamine + phosphate. Its pathway is cell wall biogenesis; peptidoglycan biosynthesis. Cell wall formation. Adds enolpyruvyl to UDP-N-acetylglucosamine. In Rickettsia prowazekii (strain Madrid E), this protein is UDP-N-acetylglucosamine 1-carboxyvinyltransferase.